Reading from the N-terminus, the 435-residue chain is Glutamate-1-semialdehyde 2,1-aminomutase (435 aa).

The residue at position 266 (lysine 266) is an N6-(pyridoxal phosphate)lysine.

The protein belongs to the class-III pyridoxal-phosphate-dependent aminotransferase family. HemL subfamily. As to quaternary structure, homodimer. Pyridoxal 5'-phosphate is required as a cofactor.

It localises to the cytoplasm. It carries out the reaction (S)-4-amino-5-oxopentanoate = 5-aminolevulinate. Its pathway is porphyrin-containing compound metabolism; protoporphyrin-IX biosynthesis; 5-aminolevulinate from L-glutamyl-tRNA(Glu): step 2/2. This is Glutamate-1-semialdehyde 2,1-aminomutase from Coxiella burnetii (strain Dugway 5J108-111).